The following is a 178-amino-acid chain: Protein RICE FLOWERING LOCUS T 1 (178 aa).

It belongs to the phosphatidylethanolamine-binding protein family. As to quaternary structure, interacts with FTIP1. In terms of tissue distribution, expressed in leaf vascular tissues. Specifically expressed in the phloem including companion cells.

It is found in the cytoplasm. The protein localises to the nucleus. It localises to the endoplasmic reticulum. Probable mobile flower-promoting signal (florigen) that moves from the leaf to the shoot apical meristem (SAM) and induces flowering. Promotes the transition from vegetative growth to flowering under long day (LD) conditions. Acts upstream of MADS14 and MADS15. May also participate in the promotion of flowering under short day (SD) conditions. The chain is Protein RICE FLOWERING LOCUS T 1 from Oryza sativa subsp. japonica (Rice).